The sequence spans 208 residues: Uracil phosphoribosyltransferase (208 aa).

5-phospho-alpha-D-ribose 1-diphosphate is bound by residues arginine 78, arginine 103, and aspartate 130 to serine 138. Uracil contacts are provided by residues isoleucine 193 and glycine 198–alanine 200. Position 199 (aspartate 199) interacts with 5-phospho-alpha-D-ribose 1-diphosphate.

Belongs to the UPRTase family. It depends on Mg(2+) as a cofactor.

It carries out the reaction UMP + diphosphate = 5-phospho-alpha-D-ribose 1-diphosphate + uracil. It participates in pyrimidine metabolism; UMP biosynthesis via salvage pathway; UMP from uracil: step 1/1. Allosterically activated by GTP. In terms of biological role, catalyzes the conversion of uracil and 5-phospho-alpha-D-ribose 1-diphosphate (PRPP) to UMP and diphosphate. The protein is Uracil phosphoribosyltransferase of Histophilus somni (strain 129Pt) (Haemophilus somnus).